Here is a 1584-residue protein sequence, read N- to C-terminus: Adhesion G protein-coupled receptor B1 (1584 aa).

The N-terminal stretch at 1–30 (MRGQAAAPGPVWILAPLLLLLLLLGRRARA) is a signal peptide. Residues 31-948 (AAGADAGPGP…ANMEKATLPS (918 aa)) are Extracellular-facing. The N-linked (GlcNAc...) asparagine glycan is linked to Asn-64. The disordered stretch occupies residues 146–167 (RRQQPPQHDGLRPRAGPPGPTD). In terms of domain architecture, TSP type-1 1 spans 261–315 (TGGWKLWSLWGECTRDCGGGLQTRTRTCLPAPGVEGGGCEGVLEEGRQCNREACG). Cystine bridges form between Cys-273/Cys-309, Cys-277/Cys-314, and Cys-288/Cys-299. The disordered stretch occupies residues 313 to 335 (ACGPAGRTSSRSQSLRSTDARRR). Residues 319-329 (RTSSRSQSLRS) are compositionally biased toward low complexity. TSP type-1 domains lie at 354–407 (DPAA…AVCP), 409–462 (HGAW…ALCP), 467–520 (DGNW…QQCP), and 522–575 (DGKW…QRCP). 14 cysteine pairs are disulfide-bonded: Cys-366-Cys-400, Cys-370-Cys-406, Cys-381-Cys-390, Cys-421-Cys-456, Cys-425-Cys-461, Cys-436-Cys-446, Cys-479-Cys-514, Cys-483-Cys-519, Cys-494-Cys-504, Cys-534-Cys-569, Cys-538-Cys-574, Cys-549-Cys-559, Cys-581-Cys-616, and Cys-604-Cys-634. N-linked (GlcNAc...) asparagine glycosylation occurs at Asn-401. Asn-607 carries an N-linked (GlcNAc...) asparagine glycan. Thr-609 is modified (phosphothreonine). N-linked (GlcNAc...) asparagine glycans are attached at residues Asn-692, Asn-844, Asn-877, and Asn-881. Positions 760–939 (RDAYQVTDNL…AILAQLSADA (180 aa)) constitute a GAIN-B domain. 2 disulfides stabilise this stretch: Cys-884/Cys-921 and Cys-909/Cys-923. The GPS stretch occupies residues 884–939 (CILWDETDVPSSSAPPQLGPWSWRGCRTVPLDALRTRCLCDRLSTFAILAQLSADA). An N-terminal stalk following vasculostatin-120 cleavage which is not required for signaling activity region spans residues 927–943 (STFAILAQLSADANMEK). Residues 949-969 (VTLIVGCGVSSLTLLMLVIIY) traverse the membrane as a helical segment. The Cytoplasmic portion of the chain corresponds to 970 to 980 (VSVWRYIRSER). Residues 981-1001 (SVILINFCLSIISSNALILIG) traverse the membrane as a helical segment. Residues 1002–1008 (QTQTRNK) lie on the Extracellular side of the membrane. The chain crosses the membrane as a helical span at residues 1009–1029 (VVCTLVAAFLHFFFLSSFCWV). The Cytoplasmic portion of the chain corresponds to 1030-1052 (LTEAWQSYMAVTGHLRNRLIRKR). The chain crosses the membrane as a helical span at residues 1053–1073 (FLCLGWGLPALVVAISVGFTK). At 1074-1093 (AKGYSTMNYCWLSLEGGLLY) the chain is on the extracellular side. Residues 1094 to 1114 (AFVGPAAAVVLVNMVIGILVF) traverse the membrane as a helical segment. Residues 1115-1136 (NKLVSKDGITDKKLKERAGASL) lie on the Cytoplasmic side of the membrane. Residues 1137-1157 (WSSCVVLPLLALTWMSAVLAV) form a helical membrane-spanning segment. Topologically, residues 1158-1166 (TDRRSALFQ) are extracellular. The chain crosses the membrane as a helical span at residues 1167 to 1187 (ILFAVFDSLEGFVIVMVHCIL). Topologically, residues 1188–1584 (RREVQDAVKC…QDIIDLQTEV (397 aa)) are cytoplasmic. Positions 1365–1584 (YSIHIDQMPQ…QDIIDLQTEV (220 aa)) are involved in interaction with MAGI1. Disordered stretches follow at residues 1385–1475 (EASL…RRKS) and 1501–1548 (RKLQ…KKEL). Residues 1391 to 1439 (RSPPSRQPPSGGPPEAPPAQPPPPPPPPPPPPQQPLPPPPNLEPAPPSL) are compositionally biased toward pro residues. A compositionally biased stretch (polar residues) spans 1453 to 1469 (TGPSTKNENVATLSVSS). Ser-1469 bears the Phosphoserine mark. Basic and acidic residues predominate over residues 1501-1522 (RKLQHAAEKDKEVLGPDSKPEK). Residues 1581-1584 (QTEV) form an indispensable for interaction with MAGI1 region.

It belongs to the G-protein coupled receptor 2 family. LN-TM7 subfamily. Interacts with ELMO1 and DOCK. When bound to ELMO1 and DOCK1, acts as a module to promote apoptotic cell engulfment. Interacts with MDM2; the interaction results in inhibition of MDM2-mediated ubiquitination and degradation of DLG4/PSD95. Interacts with PARD3 and TIAM1; the interaction is required for correct dendritic. localization of PARD3 and TIAM1 and for dendritic spine formation. Interacts with MAGI1. Interacts with MAGI3. Interacts with BAIAP2. Interacts with PHYHIP. Interacts with DLG4 (via PDZ domain). Vasculostatin-120: Interacts with CD36. Vasculostatin-120: Interacts with ARRB2. Interacts with BAIAP3; this interaction is direct. In terms of processing, proteolytically cleaved to produce vasculostatin-40 and vasculostatin-120. Vasculostatin-40 is the major form and is produced through proteolytic cleavage by MMP14 between residues 321 and 329 with cleavage likely to be between Ser-326 and Leu-327. Post-translationally, ubiquitinated. In terms of tissue distribution, expressed in brain (at protein level). Expressed on mononuclear phagocytes and monocyte-derived macrophages in the gastric mucosa (at protein level). Expressed in normal pancreatic tissue but not in pancreatic tumor tissue. Reduced or no expression is observed in some glioblastomas.

Its subcellular location is the cell membrane. It is found in the cell projection. The protein localises to the phagocytic cup. It localises to the cell junction. The protein resides in the focal adhesion. Its subcellular location is the dendritic spine. It is found in the postsynaptic density. The protein localises to the secreted. Functionally, phosphatidylserine receptor which enhances the engulfment of apoptotic cells. Also mediates the binding and engulfment of Gram-negative bacteria. Stimulates production of reactive oxygen species by macrophages in response to Gram-negative bacteria, resulting in enhanced microbicidal macrophage activity. In the gastric mucosa, required for recognition and engulfment of apoptotic gastric epithelial cells. Promotes myoblast fusion. Activates the Rho pathway in a G-protein-dependent manner. Inhibits MDM2-mediated ubiquitination and degradation of DLG4/PSD95, promoting DLG4 stability and regulating synaptic plasticity. Required for the formation of dendritic spines by ensuring the correct localization of PARD3 and TIAM1. Potent inhibitor of angiogenesis in brain and may play a significant role as a mediator of the p53/TP53 signal in suppression of glioblastoma. Its function is as follows. Inhibits angiogenesis in a CD36-dependent manner. In terms of biological role, inhibits angiogenesis. The polypeptide is Adhesion G protein-coupled receptor B1 (Homo sapiens (Human)).